An 832-amino-acid chain; its full sequence is Protein P (832 aa).

Residues 1-177 (MPLSCPHFRK…FCGSPYSWEQ (177 aa)) are terminal protein domain (TP). The interval 178 to 335 (ELQHGAEPVC…YCLSHLVNLL (158 aa)) is spacer. Residues 208-224 (KQSRLGLQSQQRQLARS) show a composition bias toward low complexity. Positions 208-241 (KQSRLGLQSQQRQLARSHQGRSGSIRARVHSTTR) are disordered. The segment at 336–679 (EDWGPCTEHG…YLTLYPVARQ (344 aa)) is polymerase/reverse transcriptase domain (RT). The Reverse transcriptase domain maps to 346 to 589 (EHHIRIPRTP…YSLNFMGYII (244 aa)). Aspartate 418, aspartate 540, and aspartate 541 together coordinate Mg(2+).

Belongs to the hepadnaviridae P protein family.

The enzyme catalyses DNA(n) + a 2'-deoxyribonucleoside 5'-triphosphate = DNA(n+1) + diphosphate. It catalyses the reaction Endonucleolytic cleavage to 5'-phosphomonoester.. Its activity is regulated as follows. Activated by host HSP70 and HSP40 in vitro to be able to bind the epsilon loop of the pgRNA. Because deletion of the RNase H region renders the protein partly chaperone-independent, the chaperones may be needed indirectly to relieve occlusion of the RNA-binding site by this domain. Inhibited by several reverse-transcriptase inhibitors: Lamivudine, Adefovir and Entecavir. Its function is as follows. Multifunctional enzyme that converts the viral RNA genome into dsDNA in viral cytoplasmic capsids. This enzyme displays a DNA polymerase activity that can copy either DNA or RNA templates, and a ribonuclease H (RNase H) activity that cleaves the RNA strand of RNA-DNA heteroduplexes in a partially processive 3'- to 5'-endonucleasic mode. Neo-synthesized pregenomic RNA (pgRNA) are encapsidated together with the P protein, and reverse-transcribed inside the nucleocapsid. Initiation of reverse-transcription occurs first by binding the epsilon loop on the pgRNA genome, and is initiated by protein priming, thereby the 5'-end of (-)DNA is covalently linked to P protein. Partial (+)DNA is synthesized from the (-)DNA template and generates the relaxed circular DNA (RC-DNA) genome. After budding and infection, the RC-DNA migrates in the nucleus, and is converted into a plasmid-like covalently closed circular DNA (cccDNA). The activity of P protein does not seem to be necessary for cccDNA generation, and is presumably released from (+)DNA by host nuclear DNA repair machinery. The polypeptide is Protein P (Gibbon hepatitis B virus subtype ayw3q (isolate Hope) (HBVgbn)).